Consider the following 202-residue polypeptide: Glycerol-3-phosphate acyltransferase (202 aa).

6 consecutive transmembrane segments (helical) span residues 3-23 (NLIIYAFIYLLGSISFGLILT), 61-81 (IATIILDFAKAAIPLLILKFL), 87-107 (LLWSVAVLAIFGHCFSIYLLF), 117-137 (AGAMIVLLPLEVLTAFIVWAV), 144-164 (ISSLASLAALLAFIVSSFIFN), and 167-187 (LEIHTHAPVFIIAFIIVYKHL).

Belongs to the PlsY family. In terms of assembly, probably interacts with PlsX.

It localises to the cell inner membrane. It catalyses the reaction an acyl phosphate + sn-glycerol 3-phosphate = a 1-acyl-sn-glycero-3-phosphate + phosphate. Its pathway is lipid metabolism; phospholipid metabolism. Its function is as follows. Catalyzes the transfer of an acyl group from acyl-phosphate (acyl-PO(4)) to glycerol-3-phosphate (G3P) to form lysophosphatidic acid (LPA). This enzyme utilizes acyl-phosphate as fatty acyl donor, but not acyl-CoA or acyl-ACP. This Campylobacter jejuni subsp. doylei (strain ATCC BAA-1458 / RM4099 / 269.97) protein is Glycerol-3-phosphate acyltransferase.